The following is a 258-amino-acid chain: Ribosomal RNA small subunit methyltransferase A (258 aa).

S-adenosyl-L-methionine is bound by residues histidine 13, leucine 15, glycine 41, aspartate 63, aspartate 87, and asparagine 106.

It belongs to the class I-like SAM-binding methyltransferase superfamily. rRNA adenine N(6)-methyltransferase family. RsmA subfamily.

It localises to the cytoplasm. It carries out the reaction adenosine(1518)/adenosine(1519) in 16S rRNA + 4 S-adenosyl-L-methionine = N(6)-dimethyladenosine(1518)/N(6)-dimethyladenosine(1519) in 16S rRNA + 4 S-adenosyl-L-homocysteine + 4 H(+). Its function is as follows. Specifically dimethylates two adjacent adenosines (A1518 and A1519) in the loop of a conserved hairpin near the 3'-end of 16S rRNA in the 30S particle. May play a critical role in biogenesis of 30S subunits. The protein is Ribosomal RNA small subunit methyltransferase A of Cytophaga hutchinsonii (strain ATCC 33406 / DSM 1761 / CIP 103989 / NBRC 15051 / NCIMB 9469 / D465).